Here is a 447-residue protein sequence, read N- to C-terminus: Monocarboxylate transporter 11 (447 aa).

Residues methionine 1–glycine 11 are Cytoplasmic-facing. 12 helical membrane passes run glycine 12 to leucine 32, alanine 54 to leucine 74, alanine 80 to phenylalanine 100, leucine 107 to leucine 127, valine 139 to alanine 159, phenylalanine 162 to histidine 182, alanine 219 to valine 239, glycine 249 to alanine 269, leucine 288 to valine 308, glycine 330 to valine 350, glycine 354 to leucine 374, and alanine 383 to proline 403. Residues arginine 404–cysteine 447 are Cytoplasmic-facing.

Belongs to the major facilitator superfamily. Monocarboxylate porter (TC 2.A.1.13) family. In terms of assembly, interacts with isoform 2 of BSG.

Its subcellular location is the endoplasmic reticulum membrane. The protein resides in the cell membrane. The enzyme catalyses pyruvate(out) + H(+)(out) = pyruvate(in) + H(+)(in). Its function is as follows. Proton-linked monocarboxylate transporter. It catalyzes the transport of pyruvate across the plasma membrane. Probably involved in hepatic lipid metabolism: overexpression results in an increase of triacylglycerol(TAG) levels, small increases in intracellular diacylglycerols and decreases in lysophosphatidylcholine, cholesterol ester and sphingomyelin lipids. The sequence is that of Monocarboxylate transporter 11 (Slc16a11) from Mus musculus (Mouse).